Reading from the N-terminus, the 497-residue chain is Lysine--tRNA ligase (497 aa).

2 residues coordinate Mg(2+): E405 and E412.

The protein belongs to the class-II aminoacyl-tRNA synthetase family. Homodimer. Mg(2+) is required as a cofactor.

It is found in the cytoplasm. The enzyme catalyses tRNA(Lys) + L-lysine + ATP = L-lysyl-tRNA(Lys) + AMP + diphosphate. This chain is Lysine--tRNA ligase, found in Gloeobacter violaceus (strain ATCC 29082 / PCC 7421).